The sequence spans 154 residues: Endoribonuclease YbeY (154 aa).

Zn(2+) is bound by residues His113, His117, and His123.

Belongs to the endoribonuclease YbeY family. Zn(2+) serves as cofactor.

Its subcellular location is the cytoplasm. Functionally, single strand-specific metallo-endoribonuclease involved in late-stage 70S ribosome quality control and in maturation of the 3' terminus of the 16S rRNA. The sequence is that of Endoribonuclease YbeY from Vibrio campbellii (strain ATCC BAA-1116).